Reading from the N-terminus, the 88-residue chain is UPF0335 protein MexAM1_META1p2947 (88 aa).

This sequence belongs to the UPF0335 family.

The protein is UPF0335 protein MexAM1_META1p2947 of Methylorubrum extorquens (strain ATCC 14718 / DSM 1338 / JCM 2805 / NCIMB 9133 / AM1) (Methylobacterium extorquens).